The sequence spans 438 residues: uncharacterized protein (438 aa).

Residue H59 participates in Zn(2+) binding. E62 (proton acceptor) is an active-site residue. Zn(2+) is bound by residues H63 and E139.

It belongs to the peptidase M16 family. Requires Zn(2+) as cofactor.

This is an uncharacterized protein from Mycobacterium tuberculosis (strain CDC 1551 / Oshkosh).